Consider the following 366-residue polypeptide: MALCGLPEFTLLLLPLLARLSAGDCPCSEAALCQPIRHRPDFEVFVFDVGQKTWKSYDWSQITTVAAFGKYDPELMCYAHSKGARVVLKGDISLKNIIDPTFRASWIAQKVDLAKAQYMDGINIDIEQEVNCSSPEYEALTALVKETTESFQREIEGSQVTFDVAWSPKRIDKRCYNYTGIADACDFLFVMSYDEQSQIWSECIAAANAPYNQTLTGYIDYIKMGISPKKLVMGVPWYGYDYICLNLSKDDICTITKVPFRGAPCSDAAGHQVPYKVIMKQVNGSVSGSQWNKDQQAPYYNYKDPAGRFHQVWYDNPQSISLKAAYVKNYGLRGIGMWNANCLDYSDDALAREQTQEMWGALKPRL.

The first 22 residues, 1–22, serve as a signal peptide directing secretion; it reads MALCGLPEFTLLLLPLLARLSA. In terms of domain architecture, GH18 spans 23–366; the sequence is GDCPCSEAAL…EMWGALKPRL (344 aa). Catalysis depends on E127, which acts as the Proton donor. N-linked (GlcNAc...) asparagine glycans are attached at residues N131, N177, N212, N246, and N283.

This sequence belongs to the glycosyl hydrolase 18 family.

It localises to the lysosome. Functionally, involved in the degradation of asparagine-linked glycoproteins. Hydrolyze of N-acetyl-beta-D-glucosamine (1-4)N-acetylglucosamine chitobiose core from the reducing end of the bond, it requires prior cleavage by glycosylasparaginase. The chain is Di-N-acetylchitobiase (Ctbs) from Mus musculus (Mouse).